A 114-amino-acid polypeptide reads, in one-letter code: U17-barytoxin-Tl1a (114 aa).

The signal sequence occupies residues 1 to 20 (MKTIIVFLSLLVLATKFGDA). Residues 21 to 74 (NEGVNQEQMKEVIQNEFREDFLNEMAPMSLLQQLEAIESTLLEKEADRNSRQKR) constitute a propeptide that is removed on maturation. Cystine bridges form between Cys-75–Cys-88, Cys-82–Cys-93, and Cys-87–Cys-108.

Belongs to the neurotoxin 14 (magi-1) family. 03 (ICK-30-40) subfamily. In terms of tissue distribution, expressed by the venom gland.

Its subcellular location is the secreted. Functionally, ion channel inhibitor. In Trittame loki (Brush-footed trapdoor spider), this protein is U17-barytoxin-Tl1a.